We begin with the raw amino-acid sequence, 301 residues long: Probable 5-dehydro-4-deoxyglucarate dehydratase (301 aa).

Belongs to the DapA family.

It carries out the reaction 5-dehydro-4-deoxy-D-glucarate + H(+) = 2,5-dioxopentanoate + CO2 + H2O. Its pathway is carbohydrate acid metabolism; D-glucarate degradation; 2,5-dioxopentanoate from D-glucarate: step 2/2. The chain is Probable 5-dehydro-4-deoxyglucarate dehydratase from Rhizobium meliloti (strain 1021) (Ensifer meliloti).